The following is a 543-amino-acid chain: Glutamyl-tRNA(Gln) amidotransferase subunit A, chloroplastic/mitochondrial (543 aa).

Residues K121 and S196 each act as charge relay system in the active site. The active-site Acyl-ester intermediate is S220.

Belongs to the amidase family. GatA subfamily. Subunit of the heterotrimeric GatCAB amidotransferase (AdT) complex, composed of A, B and C subunits.

It localises to the mitochondrion. The protein localises to the plastid. The protein resides in the chloroplast stroma. The catalysed reaction is L-glutamyl-tRNA(Gln) + L-glutamine + ATP + H2O = L-glutaminyl-tRNA(Gln) + L-glutamate + ADP + phosphate + H(+). Its function is as follows. Allows the formation of correctly charged Gln-tRNA(Gln) through the transamidation of misacylated Glu-tRNA(Gln) in chloroplasts and mitochondria. The reaction takes place in the presence of glutamine and ATP through an activated gamma-phospho-Glu-tRNA(Gln). The chain is Glutamyl-tRNA(Gln) amidotransferase subunit A, chloroplastic/mitochondrial from Zea mays (Maize).